Reading from the N-terminus, the 158-residue chain is E3 ubiquitin ligase complex SCF subunit sconC (158 aa).

The interval 100–158 is interaction with the F-box domain of F-box proteins; that stretch reads ILAANYLDIKALLDVGCKTVANMIKGKSPEEIRKTFNIQNDFTPEEEDQIRRENEWAEE.

This sequence belongs to the SKP1 family. As to quaternary structure, component of the SCF (SKP1-CUL1-F-box protein) E3 ubiquitin ligase complexes.

The protein operates within protein modification; protein ubiquitination. Its function is as follows. Essential component of the SCF (SKP1-CUL1-F-box protein) E3 ubiquitin ligase complexes, which mediate the ubiquitination and subsequent proteasomal degradation of target proteins. Controls sulfur metabolite repression, probably by mediating the inactivation or degradation of the metR transcription factor. The chain is E3 ubiquitin ligase complex SCF subunit sconC (sconC) from Aspergillus fumigatus (strain CBS 144.89 / FGSC A1163 / CEA10) (Neosartorya fumigata).